A 610-amino-acid polypeptide reads, in one-letter code: Elongation factor 4 (610 aa).

In terms of domain architecture, tr-type G spans 11–193; the sequence is ENIRNFSIIA…QIVEKVPAPS (183 aa). Residues 23 to 28 and 140 to 143 contribute to the GTP site; these read DHGKST and NKID.

This sequence belongs to the TRAFAC class translation factor GTPase superfamily. Classic translation factor GTPase family. LepA subfamily.

The protein localises to the cell membrane. The enzyme catalyses GTP + H2O = GDP + phosphate + H(+). Functionally, required for accurate and efficient protein synthesis under certain stress conditions. May act as a fidelity factor of the translation reaction, by catalyzing a one-codon backward translocation of tRNAs on improperly translocated ribosomes. Back-translocation proceeds from a post-translocation (POST) complex to a pre-translocation (PRE) complex, thus giving elongation factor G a second chance to translocate the tRNAs correctly. Binds to ribosomes in a GTP-dependent manner. The protein is Elongation factor 4 of Streptococcus equi subsp. equi (strain 4047).